Reading from the N-terminus, the 746-residue chain is MEHTYQYSWIIPFIPLPVPILLGVGLLLFPTATKNLRRMWTFLSIFLLSIVMIFSLYLSIQQIFLSCIHQNVWSWTINNEFSFEFGYFIDPLTSIMLILITTVGILVLIYSDNYMSHDQGYLRFFAYMGFFNTSMLGLVTSSNLIQVYFFWELVGMCSYLLIGFWFTRPIAANACQKAFVTNRVGDFGLLLGILGLYWITGSFEFQDLFEIFNNLILTNRVNLLFFTLCAFLLFVGPIAKSAQFPLHVWLPDAMEGPTPISALIHAATMVAAGIFLVARLLPIFIVIPSIMYIISLIGIITVLLGATLALAQKDIKRGLAYSTMSQLGYMMLALGMGSYRAALFHLITHAYSKALLFLGSGSIIHSMEAIVGYSPDKSQNMILMGGLTKHVPITKTAFLVGTLSLCGIPPLACFWSKDEILNDSFLFSPIFAIIACSTAGLTAFYMFRIYLLTFEGHLNTYFLNYSGKKSSSFYSISLWGKEEEKNLNKNFGLVPLLITNNTKRASVFCKKTYKISNNVRNQTFITVENFGLNTRTFYYPQESDNTILFPMLLLLLFTLFVGAIGIPFNQEGIDFDILSKLFMPSINLLHKNAQNFVDWYEFFRNATFSVSIALFGIFIAYCLYKPFYSSLLNLTVLNSFQTWSSKRIRWEKLINFVYNWSYNRGYIDAFFKTSLTESIIRLAKQTNFFDKRIIDGITNGVGITSFFVGEVTKYIGGSRISSYLFLYLSYVLIFLTILFFFYFEKF.

16 helical membrane passes run Trp9 to Phe29, Trp40 to Ile60, Ile89 to Ile109, Phe125 to Ile145, Val147 to Thr167, Gly185 to Phe205, Val221 to Ser241, Thr258 to Ala278, Leu280 to Ile300, Leu327 to Ile347, Ala354 to Ser374, Thr396 to Ser416, Phe425 to Tyr445, Ile547 to Pro567, Phe608 to Tyr628, and Tyr723 to Phe743.

This sequence belongs to the complex I subunit 5 family. As to quaternary structure, NDH is composed of at least 16 different subunits, 5 of which are encoded in the nucleus.

It localises to the plastid. The protein resides in the chloroplast thylakoid membrane. The catalysed reaction is a plastoquinone + NADH + (n+1) H(+)(in) = a plastoquinol + NAD(+) + n H(+)(out). It carries out the reaction a plastoquinone + NADPH + (n+1) H(+)(in) = a plastoquinol + NADP(+) + n H(+)(out). Its function is as follows. NDH shuttles electrons from NAD(P)H:plastoquinone, via FMN and iron-sulfur (Fe-S) centers, to quinones in the photosynthetic chain and possibly in a chloroplast respiratory chain. The immediate electron acceptor for the enzyme in this species is believed to be plastoquinone. Couples the redox reaction to proton translocation, and thus conserves the redox energy in a proton gradient. This is NAD(P)H-quinone oxidoreductase subunit 5, chloroplastic (ndhF) from Lobularia maritima (Sweet alyssum).